Reading from the N-terminus, the 319-residue chain is Formimidoylglutamase (319 aa).

6 residues coordinate Mn(2+): His-131, Asp-154, His-156, Asp-158, Cys-248, and Asp-250.

This sequence belongs to the arginase family. It depends on Mn(2+) as a cofactor.

The catalysed reaction is N-formimidoyl-L-glutamate + H2O = formamide + L-glutamate. The protein operates within amino-acid degradation; L-histidine degradation into L-glutamate; L-glutamate from N-formimidoyl-L-glutamate (hydrolase route): step 1/1. In terms of biological role, catalyzes the conversion of N-formimidoyl-L-glutamate to L-glutamate and formamide. In Legionella pneumophila (strain Paris), this protein is Formimidoylglutamase.